Reading from the N-terminus, the 293-residue chain is tRNA (guanine(9)-N1)-methyltransferase (293 aa).

Positions 1-31 (MSNDEINQNEEKVKRTPPLPPVPEGMSKKQW) are disordered. Thr-16 is modified (phosphothreonine). The stretch at 32-61 (KKMCKRQRWEENKAKYNAERRVKKKRLRHE) forms a coiled coil. Positions 83 to 279 (EPRINVNQTD…SVLPPRKLDA (197 aa)) constitute an SAM-dependent MTase TRM10-type domain. S-adenosyl-L-methionine is bound by residues 186–187 (LT), Gly-206, 210–214 (DKNRY), Cys-218, Leu-232, and 244–246 (RVL). Asp-210 acts as the Proton acceptor in catalysis. Ser-283 carries the phosphoserine modification.

It belongs to the class IV-like SAM-binding methyltransferase superfamily. TRM10 family. In terms of assembly, monomer.

It is found in the cytoplasm. It localises to the nucleus. The catalysed reaction is guanosine(9) in tRNA + S-adenosyl-L-methionine = N(1)-methylguanosine(9) in tRNA + S-adenosyl-L-homocysteine + H(+). Its function is as follows. S-adenosyl-L-methionine-dependent guanine N(1)-methyltransferase that catalyzes the formation of N(1)-methylguanine at position 9 (m1G9) in cytoplasmic tRNAs. In Saccharomyces cerevisiae (strain ATCC 204508 / S288c) (Baker's yeast), this protein is tRNA (guanine(9)-N1)-methyltransferase.